The chain runs to 814 residues: Telomere repeats-binding bouquet formation protein 1 (814 aa).

ARM repeat units lie at residues 93–136 (EMFR…KTSR) and 327–368 (GGLP…GMST). Disordered regions lie at residues 461 to 521 (DQDS…ELKR), 551 to 584 (STPT…LSDD), and 653 to 753 (FRRS…KRQN). Positions 488–512 (EKSKKRKHKQKRENERSDNQETRRE) form a coiled coil. Basic and acidic residues-rich tracts occupy residues 499-521 (RENE…ELKR), 565-577 (IFRH…RNQR), and 679-688 (EHSTSAQEHK). Over residues 689 to 699 (QKSKREKHKLS) the composition is skewed to basic residues. Basic and acidic residues predominate over residues 714-741 (RPRETYSPDVKQWTDHRHLKKSSEDARS). The Myb-like domain maps to 746 to 799 (GRHRKRQNWSDKELCYLTKGVKRFGHSWNTILWKYPFHPGRTNVDLAKKFYHMQ).

Belongs to the TERB1 family. Component of the MAJIN-TERB1-TERB2 complex.

It localises to the chromosome. The protein resides in the telomere. The protein localises to the nucleus inner membrane. Meiosis-specific telomere-associated protein involved in meiotic telomere attachment to the nucleus inner membrane, a crucial step for homologous pairing and synapsis. Component of the MAJIN-TERB1-TERB2 complex, which promotes telomere cap exchange by mediating attachment of telomeric DNA to the inner nuclear membrane and replacement of the protective cap of telomeric chromosomes: in early meiosis, the MAJIN-TERB1-TERB2 complex associates with telomeric DNA and the shelterin/telosome complex. During prophase, the complex matures and promotes release of the shelterin/telosome complex from telomeric DNA. In the MAJIN-TERB1-TERB2 complex, TERB1 probably mediates association with the shelterin/telosome complex. This chain is Telomere repeats-binding bouquet formation protein 1 (ccdc79), found in Danio rerio (Zebrafish).